Here is a 262-residue protein sequence, read N- to C-terminus: ELL-associated factor 2 (262 aa).

The interval 17–104 (LKLGESFEKQ…TGECRLEKLS (88 aa)) is necessary for interaction with ELL. Phosphoserine occurs at positions 146, 151, and 154. The interval 170 to 237 (MDQMSSCDSS…EADATCHRLQ (68 aa)) is disordered. Residues 174–192 (SSCDSSSDSKSSSSSSSED) are compositionally biased toward low complexity. Residues 177–262 (DSSSDSKSSS…LSESESDSED (86 aa)) form a necessary for transactivation activity region. A compositionally biased stretch (acidic residues) spans 193 to 202 (SSSDSEDDDQ). Positions 227–237 (SEADATCHRLQ) are enriched in basic and acidic residues. The interval 248 to 262 (RSDLQLSESESDSED) is necessary for interaction with TCEA1 and transactivation activity.

It belongs to the EAF family. As to quaternary structure, component of the super elongation complex (SEC), at least composed of EAF1, EAF2, CDK9, MLLT3/AF9, AFF (AFF1 or AFF4), the P-TEFb complex and ELL (ELL, ELL2 or ELL3). Interacts with ELL and ELL2. Isoform 1 and isoform 2 interact with TCEA1. Isoform 1 is expressed in ovary, uterus, mammary glands, brain, spleen, liver, lung, thymus, kidney, skeletal muscle, skin and testis. Isoform 2 is expressed in kidney.

It localises to the nucleus speckle. Acts as a transcriptional transactivator of ELL and ELL2 elongation activities. Acts as a transcriptional transactivator of TCEA1 elongation activity. This Mus musculus (Mouse) protein is ELL-associated factor 2 (Eaf2).